Reading from the N-terminus, the 500-residue chain is Glutelin type-B 4 (500 aa).

The first 24 residues, 1-24, serve as a signal peptide directing secretion; the sequence is MATIAFSRLSIYFCVLLLCHGSMA. Intrachain disulfides connect Cys45–Cys78 and Cys121–Cys310. Cupin type-1 domains lie at 50 to 245 and 316 to 465; these read LQAF…LVAK and LNIE…EQAR. The span at 481–493 shows a compositional bias: polar residues; sequence RYQQQTYPGFSNE. The interval 481–500 is disordered; that stretch reads RYQQQTYPGFSNESENEALE.

The protein belongs to the 11S seed storage protein (globulins) family. As to quaternary structure, hexamer; each subunit is composed of an acidic and a basic chain derived from a single precursor and linked by a disulfide bond. In terms of tissue distribution, expressed in endosperm (at protein level).

In terms of biological role, seed storage protein. This Oryza sativa subsp. japonica (Rice) protein is Glutelin type-B 4 (GLUB4).